A 1661-amino-acid polypeptide reads, in one-letter code: Beta/gamma crystallin domain-containing protein 2 (1661 aa).

8 disordered regions span residues 72-135 (EEET…PPCV), 148-168 (PGPREPSPHPGVGLTSGSSRS), 242-268 (VPAGHSPPASHLPRPTAGGPRSTGLGS), 297-321 (PASAHLPKNQDAPAACPDRDQGRAP), 337-380 (STEL…THPG), 411-757 (EHVT…EEDE), 808-871 (LGPW…VSCS), and 883-903 (TKGPHSELGLELQGGSRPTSR). A compositionally biased stretch (basic and acidic residues) spans 105-118 (PKEKRPEGRLKEAV). The span at 337–353 (STELPLQTSQGQASVPS) shows a compositional bias: polar residues. Residues 431–442 (PSPGGLSAPSSP) show a composition bias toward low complexity. 3 stretches are compositionally biased toward polar residues: residues 507-519 (SSPTQKEVVQGSS), 628-644 (PKSTEVVQGPKGSSSIQ), and 685-697 (SEGSPISSLTQKE). A compositionally biased stretch (low complexity) spans 706–719 (PAPSSSVDRVSPSP). Polar residues predominate over residues 731 to 750 (EASTESQLVSDPTEGKTCTE). Residues 825–835 (EKEEEEEEEPE) show a composition bias toward acidic residues. A compositionally biased stretch (basic and acidic residues) spans 841–851 (DDEKLQRRQEK). Beta/gamma crystallin 'Greek key' domains follow at residues 986–1023 (GKVIFFSESGCQGSGREVWGDIVDASGWAPVASIRVVR), 1024–1067 (GCWV…RRVV), 1073–1113 (PEIS…TVSA), 1114–1156 (GLWL…KPMR), 1168–1213 (PRAV…RVLG), 1214–1256 (GCWV…RVIR), 1262–1302 (PAVV…HVLS), 1303–1345 (GVWV…QPVL), 1356–1393 (SKIQLFSRPDFLGDHFSFEDDQAALPASFRPQSCRVHG), 1394–1437 (GSWI…QKVS), 1443–1483 (PSIF…RIKG), and 1484–1525 (GIWV…YPIK). Residues 1569 to 1659 (WYYEDGLLKN…DRASQIWTIH (91 aa)) enclose the Ricin B-type lectin domain.

This sequence belongs to the beta/gamma-crystallin family.

This Homo sapiens (Human) protein is Beta/gamma crystallin domain-containing protein 2.